Here is a 127-residue protein sequence, read N- to C-terminus: Small ribosomal subunit protein uS11 (127 aa).

The protein belongs to the universal ribosomal protein uS11 family. Part of the 30S ribosomal subunit. Interacts with proteins S7 and S18. Binds to IF-3.

Located on the platform of the 30S subunit, it bridges several disparate RNA helices of the 16S rRNA. Forms part of the Shine-Dalgarno cleft in the 70S ribosome. The sequence is that of Small ribosomal subunit protein uS11 from Rhodopirellula baltica (strain DSM 10527 / NCIMB 13988 / SH1).